The primary structure comprises 289 residues: tRNA pseudouridine synthase B (289 aa).

Residue Asp-38 is the Nucleophile of the active site.

Belongs to the pseudouridine synthase TruB family. Type 1 subfamily.

The catalysed reaction is uridine(55) in tRNA = pseudouridine(55) in tRNA. Responsible for synthesis of pseudouridine from uracil-55 in the psi GC loop of transfer RNAs. This chain is tRNA pseudouridine synthase B, found in Clostridium tetani (strain Massachusetts / E88).